A 953-amino-acid polypeptide reads, in one-letter code: Isoleucine--tRNA ligase (953 aa).

Positions 57 to 67 match the 'HIGH' region motif; the sequence is PYANGDIHIGH. Residue E582 participates in L-isoleucyl-5'-AMP binding. The 'KMSKS' region signature appears at 623 to 627; sequence KMSKS. K626 is an ATP binding site. C916, C919, C936, and C939 together coordinate Zn(2+).

The protein belongs to the class-I aminoacyl-tRNA synthetase family. IleS type 1 subfamily. In terms of assembly, monomer. Requires Zn(2+) as cofactor.

Its subcellular location is the cytoplasm. It catalyses the reaction tRNA(Ile) + L-isoleucine + ATP = L-isoleucyl-tRNA(Ile) + AMP + diphosphate. Its function is as follows. Catalyzes the attachment of isoleucine to tRNA(Ile). As IleRS can inadvertently accommodate and process structurally similar amino acids such as valine, to avoid such errors it has two additional distinct tRNA(Ile)-dependent editing activities. One activity is designated as 'pretransfer' editing and involves the hydrolysis of activated Val-AMP. The other activity is designated 'posttransfer' editing and involves deacylation of mischarged Val-tRNA(Ile). The sequence is that of Isoleucine--tRNA ligase from Bordetella avium (strain 197N).